The primary structure comprises 65 residues: Large ribosomal subunit protein uL29 (65 aa).

This sequence belongs to the universal ribosomal protein uL29 family.

The protein is Large ribosomal subunit protein uL29 of Natranaerobius thermophilus (strain ATCC BAA-1301 / DSM 18059 / JW/NM-WN-LF).